Here is a 668-residue protein sequence, read N- to C-terminus: Transketolase 2 (668 aa).

A substrate-binding site is contributed by His26. Residues His66 and 114–116 (GPL) contribute to the thiamine diphosphate site. A Mg(2+)-binding site is contributed by Asp155. Positions 156 and 185 each coordinate thiamine diphosphate. Positions 185 and 187 each coordinate Mg(2+). Substrate is bound by residues His261, Arg358, and Ser385. His261 contacts thiamine diphosphate. The active-site Proton donor is the Glu413. Phe439 contributes to the thiamine diphosphate binding site. Positions 463, 471, and 522 each coordinate substrate.

The protein belongs to the transketolase family. In terms of assembly, homodimer. The cofactor is Mg(2+). Requires Ca(2+) as cofactor. Mn(2+) is required as a cofactor. It depends on Co(2+) as a cofactor. Thiamine diphosphate serves as cofactor.

It catalyses the reaction D-sedoheptulose 7-phosphate + D-glyceraldehyde 3-phosphate = aldehydo-D-ribose 5-phosphate + D-xylulose 5-phosphate. In terms of biological role, catalyzes the transfer of a two-carbon ketol group from a ketose donor to an aldose acceptor, via a covalent intermediate with the cofactor thiamine pyrophosphate. This Pasteurella multocida (strain Pm70) protein is Transketolase 2 (tktB).